We begin with the raw amino-acid sequence, 256 residues long: Osteocalcin 2 (256 aa).

A signal peptide spans 1-18; the sequence is MKTLVLLSICALLSVCWS. A propeptide spanning residues 19 to 209 is cleaved from the precursor; sequence MGAVEPEVVV…LASVLLRRRR (191 aa). The span at 38–186 shows a compositional bias: low complexity; sequence AAPADPAAAA…SSSSSSSSES (149 aa). The tract at residues 38 to 193 is disordered; it reads AAPADPAAAA…SESASDEAAK (156 aa). Positions 218–252 constitute a Gla domain; sequence PLQLESLREVCELNIACDEMAETAGIVAAYVAYYG. Ca(2+)-binding residues include Glu-222, Glu-226, Glu-229, and Asp-235. Residues Glu-222, Glu-226, and Glu-229 each carry the 4-carboxyglutamate modification. Residues Cys-228 and Cys-234 are joined by a disulfide bond. Glu-236 is modified (4-carboxyglutamate).

The protein belongs to the osteocalcin/matrix Gla protein family. Gamma-carboxyglutamate residues are formed by vitamin K dependent carboxylation by GGCX. These residues are essential for the binding of calcium.

It localises to the secreted. Its function is as follows. The carboxylated form is one of the main organic components of the bone matrix, which constitutes 1-2% of the total bone protein. The carboxylated form binds strongly to apatite and calcium. This Diplodus sargus (White seabream) protein is Osteocalcin 2.